We begin with the raw amino-acid sequence, 1038 residues long: Bone morphogenetic protein receptor type-2 (1038 aa).

The N-terminal stretch at 1 to 26 (MTSSLQRPWRVPWLPWTILLVSTAAA) is a signal peptide. Residues 27-150 (SQNQERLCAF…PPHSFNRDET (124 aa)) are Extracellular-facing. Intrachain disulfides connect Cys-34/Cys-66, Cys-60/Cys-84, Cys-94/Cys-117, Cys-99/Cys-116, and Cys-118/Cys-123. A glycan (N-linked (GlcNAc...) asparagine) is linked at Asn-55. Asn-110 carries N-linked (GlcNAc...) asparagine glycosylation. The N-linked (GlcNAc...) asparagine glycan is linked to Asn-126. A helical membrane pass occupies residues 151–171 (IIIALASVSVLAVLIVALCFG). The Cytoplasmic segment spans residues 172–1038 (YRMLTGDRKQ…VSKDIGMNCL (867 aa)). Positions 203–504 (LKLLELIGRG…QCAEERMAEL (302 aa)) constitute a Protein kinase domain. ATP contacts are provided by residues 209 to 217 (IGRGRYGAV), Lys-230, and 280 to 282 (EYY). Catalysis depends on Asp-333, which acts as the Proton acceptor. Residues 337–338 (RN) and Asp-351 each bind ATP. Thr-379 is modified (phosphothreonine). Ser-586 carries the post-translational modification Phosphoserine. Residues 593–626 (QAQARIPSPETSVTSLSTNTTTTNTTGLTPSTGM) are disordered. The span at 603-626 (TSVTSLSTNTTTTNTTGLTPSTGM) shows a compositional bias: low complexity. Phosphoserine occurs at positions 680 and 681. Disordered regions lie at residues 746–770 (PKQQ…KEPR) and 872–972 (RREQ…EKIK). The segment covering 872–896 (RREQQAGHDEGVLDRLVDRRERPLE) has biased composition (basic and acidic residues). The segment covering 937–964 (RPNSLDLSATNVLDGSSIQIGESTQDGK) has biased composition (polar residues).

This sequence belongs to the protein kinase superfamily. TKL Ser/Thr protein kinase family. TGFB receptor subfamily. As to quaternary structure, interacts with GDF5. Interacts with BMP4. Interacts with SCUBE3. Interacts with TSC22D1/TSC-22. Interacts with activin A/INHBA. The cofactor is Mg(2+). Requires Mn(2+) as cofactor. In terms of tissue distribution, highly expressed in heart and liver.

It localises to the cell membrane. It carries out the reaction L-threonyl-[receptor-protein] + ATP = O-phospho-L-threonyl-[receptor-protein] + ADP + H(+). The catalysed reaction is L-seryl-[receptor-protein] + ATP = O-phospho-L-seryl-[receptor-protein] + ADP + H(+). In terms of biological role, on ligand binding, forms a receptor complex consisting of two type II and two type I transmembrane serine/threonine kinases. Type II receptors phosphorylate and activate type I receptors which autophosphorylate, then bind and activate SMAD transcriptional regulators. Can also mediate signaling through the activation of the p38MAPK cascade. Binds to BMP7, BMP2 and, less efficiently, BMP4. Binding is weak but enhanced by the presence of type I receptors for BMPs. Mediates induction of adipogenesis by GDF6. Promotes signaling also by binding to activin A/INHBA. In Homo sapiens (Human), this protein is Bone morphogenetic protein receptor type-2 (BMPR2).